A 352-amino-acid chain; its full sequence is Ion-translocating oxidoreductase complex subunit D (352 aa).

Helical transmembrane passes span 20-40 (IMLL…WFFG), 42-62 (GTLV…ALVL), 89-109 (IPPL…VIIA), and 123-143 (PAMI…TSWL). FMN phosphoryl threonine is present on threonine 187. 5 helical membrane-spanning segments follow: residues 214-234 (ILAG…GVWL), 242-262 (WHVP…GWLF), 267-287 (LAAP…FFIL), 301-321 (LIFG…GGYP), and 322-342 (DGVA…DYYT).

It belongs to the NqrB/RnfD family. The complex is composed of six subunits: RsxA, RsxB, RsxC, RsxD, RsxE and RsxG. The cofactor is FMN.

The protein resides in the cell inner membrane. Its function is as follows. Part of a membrane-bound complex that couples electron transfer with translocation of ions across the membrane. Required to maintain the reduced state of SoxR. This is Ion-translocating oxidoreductase complex subunit D from Escherichia coli (strain UTI89 / UPEC).